The sequence spans 339 residues: Protoheme IX farnesyltransferase (339 aa).

The interval M1–R27 is disordered. The next 9 helical transmembrane spans lie at I45–P65, G67–L87, A117–V136, S140–L159, Q165–V185, W191–L211, V236–P256, L257–V277, and P309–V329.

Belongs to the UbiA prenyltransferase family. Protoheme IX farnesyltransferase subfamily.

It localises to the cell membrane. It catalyses the reaction heme b + (2E,6E)-farnesyl diphosphate + H2O = Fe(II)-heme o + diphosphate. Its pathway is porphyrin-containing compound metabolism; heme O biosynthesis; heme O from protoheme: step 1/1. In terms of biological role, converts heme B (protoheme IX) to heme O by substitution of the vinyl group on carbon 2 of heme B porphyrin ring with a hydroxyethyl farnesyl side group. In Kineococcus radiotolerans (strain ATCC BAA-149 / DSM 14245 / SRS30216), this protein is Protoheme IX farnesyltransferase.